The primary structure comprises 135 residues: L-alanine exporter AlaE (135 aa).

Helical transmembrane passes span 9-29 (VATVIFFTAVATFSELLIAGM), 75-95 (DILAFLSFQAPVYGATLLIAG), and 96-116 (ASFAEAGTAIGSAIILMILLA).

The protein belongs to the AlaE exporter family.

It is found in the cell inner membrane. Its function is as follows. Exports L-alanine. The protein is L-alanine exporter AlaE of Cereibacter sphaeroides (strain ATCC 17023 / DSM 158 / JCM 6121 / CCUG 31486 / LMG 2827 / NBRC 12203 / NCIMB 8253 / ATH 2.4.1.) (Rhodobacter sphaeroides).